The following is a 113-amino-acid chain: HIG1 domain-containing protein C25B8.07c, mitochondrial (113 aa).

The tract at residues 1 to 27 is disordered; that stretch reads MSSKLPKKSEENLELPTFPASEESLSR. The HIG1 domain occupies 12-103; that stretch reads NLELPTFPAS…PPRREAPSNS (92 aa). A run of 2 helical transmembrane segments spans residues 39 to 59 and 75 to 95; these read PFIP…GYYI and VMSQ…IGPP.

The protein localises to the mitochondrion membrane. The protein is HIG1 domain-containing protein C25B8.07c, mitochondrial of Schizosaccharomyces pombe (strain 972 / ATCC 24843) (Fission yeast).